A 459-amino-acid chain; its full sequence is Glutamate--tRNA ligase 2 (459 aa).

The 'HIGH' region signature appears at 8–18; that stretch reads PSPTGYIHIGN. Residues 249–253 carry the 'KMSKS' region motif; that stretch reads GLSKR. K252 is an ATP binding site.

Belongs to the class-I aminoacyl-tRNA synthetase family. Glutamate--tRNA ligase type 1 subfamily. Monomer.

It localises to the cytoplasm. The enzyme catalyses tRNA(Glu) + L-glutamate + ATP = L-glutamyl-tRNA(Glu) + AMP + diphosphate. In terms of biological role, catalyzes the attachment of glutamate to tRNA(Glu) in a two-step reaction: glutamate is first activated by ATP to form Glu-AMP and then transferred to the acceptor end of tRNA(Glu). The sequence is that of Glutamate--tRNA ligase 2 from Bartonella henselae (strain ATCC 49882 / DSM 28221 / CCUG 30454 / Houston 1) (Rochalimaea henselae).